Consider the following 312-residue polypeptide: Zinc transporter ZitB (312 aa).

The next 6 helical transmembrane spans lie at Leu16–Leu36, Leu40–Leu60, Leu81–Val101, Thr117–Leu137, Leu153–Leu173, and Trp177–Trp197.

The protein belongs to the cation diffusion facilitator (CDF) transporter (TC 2.A.4) family. SLC30A subfamily.

It localises to the cell inner membrane. Involved in zinc efflux across the cytoplasmic membrane, thus reducing zinc accumulation in the cytoplasm and rendering bacteria more resistant to zinc. It may contribute to zinc homeostasis at low concentrations of zinc. The protein is Zinc transporter ZitB of Yersinia pseudotuberculosis serotype I (strain IP32953).